We begin with the raw amino-acid sequence, 440 residues long: Glutamyl-tRNA reductase (440 aa).

Substrate-binding positions include 40 to 43 (TCNR), Ser100, 105 to 107 (ERE), and Gln111. Cys41 acts as the Nucleophile in catalysis. 181–186 (GTGAYA) lines the NADP(+) pocket.

This sequence belongs to the glutamyl-tRNA reductase family. In terms of assembly, homodimer.

It catalyses the reaction (S)-4-amino-5-oxopentanoate + tRNA(Glu) + NADP(+) = L-glutamyl-tRNA(Glu) + NADPH + H(+). Its pathway is porphyrin-containing compound metabolism; protoporphyrin-IX biosynthesis; 5-aminolevulinate from L-glutamyl-tRNA(Glu): step 1/2. Catalyzes the NADPH-dependent reduction of glutamyl-tRNA(Glu) to glutamate 1-semialdehyde (GSA). The polypeptide is Glutamyl-tRNA reductase (Renibacterium salmoninarum (strain ATCC 33209 / DSM 20767 / JCM 11484 / NBRC 15589 / NCIMB 2235)).